Consider the following 304-residue polypeptide: Sulfate adenylyltransferase subunit 2 (304 aa).

Belongs to the PAPS reductase family. CysD subfamily. In terms of assembly, heterodimer composed of CysD, the smaller subunit, and CysNC.

The catalysed reaction is sulfate + ATP + H(+) = adenosine 5'-phosphosulfate + diphosphate. The protein operates within sulfur metabolism; hydrogen sulfide biosynthesis; sulfite from sulfate: step 1/3. Its function is as follows. With CysN forms the ATP sulfurylase (ATPS) that catalyzes the adenylation of sulfate producing adenosine 5'-phosphosulfate (APS) and diphosphate, the first enzymatic step in sulfur assimilation pathway. APS synthesis involves the formation of a high-energy phosphoric-sulfuric acid anhydride bond driven by GTP hydrolysis by CysN coupled to ATP hydrolysis by CysD. This is Sulfate adenylyltransferase subunit 2 from Xylella fastidiosa (strain Temecula1 / ATCC 700964).